Here is a 313-residue protein sequence, read N- to C-terminus: Acetaldehyde dehydrogenase 1 (313 aa).

16 to 19 is a binding site for NAD(+); it reads SGNI. The Acyl-thioester intermediate role is filled by C131. NAD(+) contacts are provided by residues 162–170 and N281; that span reads SAGPGTRAN.

It belongs to the acetaldehyde dehydrogenase family.

It carries out the reaction acetaldehyde + NAD(+) + CoA = acetyl-CoA + NADH + H(+). In Mycobacterium sp. (strain JLS), this protein is Acetaldehyde dehydrogenase 1.